The following is a 140-amino-acid chain: RxLR effector protein CRE2 (140 aa).

Residues 1 to 24 (MRWLIWTAVSTLVMLLAMTEVSAS) form the signal peptide. The RxLR-dEER motif lies at 56 to 72 (RSLRDKSSSLITESEER).

This sequence belongs to the RxLR effector family.

It is found in the secreted. The protein localises to the host cell. Effector that is involved in host plant infection. Contributes to virulence during the early infection stage, by inhibiting plant defense responses induced by both PAMP-triggered immunity (PTI) and effector-triggered immunity (ETI). The polypeptide is RxLR effector protein CRE2 (Phytophthora infestans (strain T30-4) (Potato late blight agent)).